The primary structure comprises 770 residues: ATP-dependent RNA helicase mak5 (770 aa).

The span at 1-10 (MGQKRQRDQK) shows a compositional bias: basic and acidic residues. Disordered stretches follow at residues 1-33 (MGQKRQRDQKGPTLHVRKRKRTGKPTNVAERES) and 78-174 (NGQL…AKDR). The segment covering 105–118 (TEFDDEWNGFSDED) has biased composition (acidic residues). 2 stretches are compositionally biased toward basic and acidic residues: residues 138–154 (NGKKGKDAKNKKDIKAK) and 162–174 (EQKEKDGAQAKDR). Positions 197–225 (SAWEPLGLSPETLTSLSKLKFSTPTSVQK) match the Q motif motif. A Helicase ATP-binding domain is found at 228 to 437 (IPPILDGHDV…AGKGKWTGGD (210 aa)). 241–248 (ASTGSGKT) is an ATP binding site. Positions 363-366 (DEAD) match the DEAD box motif. The tract at residues 384–404 (LDRVEDGGPPDEEDDSSEENV) is disordered. Positions 391–401 (GPPDEEDDSSE) are enriched in acidic residues. The Helicase C-terminal domain maps to 489–639 (YLYTLLLYHP…KLPLESLELD (151 aa)). The tract at residues 693-713 (KGWGRGRGRGRQERDRQVGST) is disordered.

Belongs to the DEAD box helicase family. DDX24/MAK5 subfamily.

It is found in the nucleus. The protein resides in the nucleolus. It carries out the reaction ATP + H2O = ADP + phosphate + H(+). Its function is as follows. ATP-binding RNA helicase involved in the biogenesis of 60S ribosomal subunits and is required for the normal formation of 25S and 5.8S rRNAs. This chain is ATP-dependent RNA helicase mak5 (mak5), found in Emericella nidulans (strain FGSC A4 / ATCC 38163 / CBS 112.46 / NRRL 194 / M139) (Aspergillus nidulans).